Reading from the N-terminus, the 554-residue chain is Probable ATP-binding cassette sub-family F member 3 homolog (554 aa).

ABC transporter domains follow at residues 89-285 and 351-554; these read GDLH…ASAR and IEFV…GLGV. Residues 122–129 and 383–390 each bind ATP; these read GRNGIGKT and GANGQGKS.

It belongs to the ABC transporter superfamily. ABCF family. EF3 subfamily.

The chain is Probable ATP-binding cassette sub-family F member 3 homolog from Encephalitozoon cuniculi (strain GB-M1) (Microsporidian parasite).